Here is a 226-residue protein sequence, read N- to C-terminus: Ribonuclease 3 (226 aa).

The RNase III domain occupies 7–129 (LPRLCRTLGY…IIGAVYLDAD (123 aa)). Residue glutamate 42 participates in Mg(2+) binding. Aspartate 46 is an active-site residue. The Mg(2+) site is built by aspartate 115 and glutamate 118. Residue glutamate 118 is part of the active site. A DRBM domain is found at 156 to 226 (DAKTLLQEYL…AAQVLELLNQ (71 aa)).

It belongs to the ribonuclease III family. In terms of assembly, homodimer. Mg(2+) is required as a cofactor.

It is found in the cytoplasm. It catalyses the reaction Endonucleolytic cleavage to 5'-phosphomonoester.. Functionally, digests double-stranded RNA. Involved in the processing of primary rRNA transcript to yield the immediate precursors to the large and small rRNAs (23S and 16S). Processes some mRNAs, and tRNAs when they are encoded in the rRNA operon. Processes pre-crRNA and tracrRNA of type II CRISPR loci if present in the organism. The protein is Ribonuclease 3 of Shewanella amazonensis (strain ATCC BAA-1098 / SB2B).